The following is a 522-amino-acid chain: Polyprenol-phosphate-mannose--protein mannosyltransferase (522 aa).

The Cytoplasmic portion of the chain corresponds to 1-42 (MTARPPESCVLAKDRPEEPVVPVVSPGPLVPVADFGPLDRLR). Residues 43 to 63 (GWIVTGLITLLATVTRFLNLG) form a helical membrane-spanning segment. Residues 64–119 (SLTDAGTPIFDEKHYAPQAWQVLNNHGVEDNPGYGLVVHPPVGKQLIAIGEAIFGY) are Extracellular-facing. Residues 120–140 (NGFGWRFTGALLGVVLVALVV) traverse the membrane as a helical segment. At 141–149 (RIVRRISRS) the chain is on the cytoplasmic side. A helical transmembrane segment spans residues 150-170 (TLVGAIAGVLLICDGVSFVTA). Residue R171 is a topological domain, extracellular. Residues 172 to 192 (TALLDGFLTFFVVAAFGALIV) form a helical membrane-spanning segment. Residues 193-239 (DRDQVRERMHIALLAGRSAATVWGPRVGVRWWRFGAGVLLGLACATK) lie on the Cytoplasmic side of the membrane. Residues 240-260 (WSGVYFVLFFGAMALAFDVAA) form a helical membrane-spanning segment. At 261–281 (RRQYQVQRPWLGTVRRDVLPS) the chain is on the extracellular side. The chain crosses the membrane as a helical span at residues 282-302 (GYALGLIPFAVYLATYAPWFA). Topologically, residues 303 to 390 (SETAIDRHAV…CGAQSCVKAE (88 aa)) are cytoplasmic. Residues 391 to 411 (MLVGTPAMWWLAVPVLAYAGW) traverse the membrane as a helical segment. The Extracellular portion of the chain corresponds to 412-418 (RMFVRRD). The helical transmembrane segment at 419–439 (WRYAVVLVGYCAGWLPWFADI) threads the bilayer. At 440–442 (DRQ) the chain is on the cytoplasmic side. The chain crosses the membrane as a helical span at residues 443–463 (MYFFYAATMAPFLVMGISLVL). Residues 464-478 (GDILYHPGQGSERRT) lie on the Extracellular side of the membrane. A helical membrane pass occupies residues 479 to 499 (LGLIVVCCYVALVVTNFAWLY). Residues 500–522 (PVLTGLPISQQTWNLEIWLPSWR) lie on the Cytoplasmic side of the membrane.

Belongs to the glycosyltransferase 39 family.

It is found in the cell membrane. Its pathway is protein modification; protein glycosylation. Functionally, protein O-mannosyltransferase that catalyzes the transfer of a single mannose residue from a polyprenol phospho-mannosyl lipidic donor to the hydroxyl group of selected serine and threonine residues in acceptor proteins. This chain is Polyprenol-phosphate-mannose--protein mannosyltransferase (pmt), found in Mycobacterium tuberculosis (strain CDC 1551 / Oshkosh).